The primary structure comprises 183 residues: Small ribosomal subunit protein uS4 (183 aa).

One can recognise an S4 RNA-binding domain in the interval 106 to 168 (RRLQTQVYRQ…AGSPLAREGH (63 aa)).

This sequence belongs to the universal ribosomal protein uS4 family. Part of the 30S ribosomal subunit. Contacts protein S5. The interaction surface between S4 and S5 is involved in control of translational fidelity.

One of the primary rRNA binding proteins, it binds directly to 16S rRNA where it nucleates assembly of the body of the 30S subunit. Functionally, with S5 and S12 plays an important role in translational accuracy. The protein is Small ribosomal subunit protein uS4 of Methanothrix thermoacetophila (strain DSM 6194 / JCM 14653 / NBRC 101360 / PT) (Methanosaeta thermophila).